The sequence spans 62 residues: Photosystem II reaction center protein Z (62 aa).

2 helical membrane-spanning segments follow: residues Ala8 to Ala28 and Trp41 to Val61.

Belongs to the PsbZ family. As to quaternary structure, PSII is composed of 1 copy each of membrane proteins PsbA, PsbB, PsbC, PsbD, PsbE, PsbF, PsbH, PsbI, PsbJ, PsbK, PsbL, PsbM, PsbT, PsbX, PsbY, PsbZ, Psb30/Ycf12, peripheral proteins PsbO, CyanoQ (PsbQ), PsbU, PsbV and a large number of cofactors. It forms dimeric complexes.

The protein resides in the cellular thylakoid membrane. May control the interaction of photosystem II (PSII) cores with the light-harvesting antenna, regulates electron flow through the 2 photosystem reaction centers. PSII is a light-driven water plastoquinone oxidoreductase, using light energy to abstract electrons from H(2)O, generating a proton gradient subsequently used for ATP formation. This chain is Photosystem II reaction center protein Z, found in Trichormus variabilis (strain ATCC 29413 / PCC 7937) (Anabaena variabilis).